A 631-amino-acid chain; its full sequence is Putative meiotic phospholipase SPO1 (631 aa).

A signal peptide spans Met-1–Ala-17. The tract at residues Gln-24 to Ala-67 is required for lipid-binding and function in meiosis. One can recognise a PLA2c domain in the interval Gln-24–Ser-631. N-linked (GlcNAc...) asparagine glycosylation is found at Asn-233, Asn-293, and Asn-303. Residues Phe-376–Ala-396 form a helical membrane-spanning segment. 5 N-linked (GlcNAc...) asparagine glycosylation sites follow: Asn-500, Asn-536, Asn-560, Asn-563, and Asn-572.

Belongs to the lysophospholipase family. In terms of assembly, interacts with SPO23. In terms of processing, glycosylated.

It localises to the endoplasmic reticulum membrane. Its subcellular location is the nucleus membrane. In terms of biological role, regulates spindle pole duplication in meiosis I, but not in mitosis. Required for meiosis I, meiosis II chromosome segregation and spore formation. Binds phosphatidylinositol (4)P mono- and polyphosphates. The sequence is that of Putative meiotic phospholipase SPO1 (SPO1) from Saccharomyces cerevisiae (strain ATCC 204508 / S288c) (Baker's yeast).